The chain runs to 670 residues: E3 ubiquitin-protein ligase MAG2 (670 aa).

2 disordered regions span residues 1–84 (MVEP…TSTR) and 124–145 (EVER…RDEH). Over residues 20–39 (DTLNATSNSSKQGVSNNKRN) the composition is skewed to polar residues. Residues 51-66 (SDGRDNAHNYHGEGRR) show a composition bias toward basic and acidic residues. An RING-type zinc finger spans residues 195-250 (CSICLSEEPVAPRMVTCGHIFCLSCLLNFFSIEETVKNKETGYSKKKKYKECPLCG). A disordered region spans residues 609–670 (TEDEKASKEN…LFSSNHQALG (62 aa)). The span at 610–622 (EDEKASKENKEFQ) shows a compositional bias: basic and acidic residues. Positions 637 to 649 (VTDSTDSPPTSNG) are enriched in low complexity.

Belongs to the RNF10 family.

The protein resides in the cytoplasm. It catalyses the reaction S-ubiquitinyl-[E2 ubiquitin-conjugating enzyme]-L-cysteine + [acceptor protein]-L-lysine = [E2 ubiquitin-conjugating enzyme]-L-cysteine + N(6)-ubiquitinyl-[acceptor protein]-L-lysine.. It participates in protein modification; protein ubiquitination. Its function is as follows. E3 ubiquitin-protein ligase involved in the degradation of non-functional 18S rRNAs in response to stalled ribosomes. Catalyzes monoubiquitination of RPS3/uS3 in response to stalled ribosomes, initiating a HEL2-dependent response that activates the degradation of non-functional 18S rRNAs. This is E3 ubiquitin-protein ligase MAG2 from Saccharomyces cerevisiae (strain ATCC 204508 / S288c) (Baker's yeast).